Consider the following 445-residue polypeptide: Exodeoxyribonuclease 7 large subunit (445 aa).

Belongs to the XseA family. In terms of assembly, heterooligomer composed of large and small subunits.

Its subcellular location is the cytoplasm. It catalyses the reaction Exonucleolytic cleavage in either 5'- to 3'- or 3'- to 5'-direction to yield nucleoside 5'-phosphates.. Functionally, bidirectionally degrades single-stranded DNA into large acid-insoluble oligonucleotides, which are then degraded further into small acid-soluble oligonucleotides. The polypeptide is Exodeoxyribonuclease 7 large subunit (Staphylococcus aureus (strain bovine RF122 / ET3-1)).